A 737-amino-acid polypeptide reads, in one-letter code: Methylcrotonoyl-CoA carboxylase subunit alpha, mitochondrial (737 aa).

The transit peptide at 1 to 33 (MASRLLLLPRRRSRHGGASLLLARLLSSSSSEA) directs the protein to the mitochondrion. One can recognise a Biotin carboxylation domain in the interval 38–485 (AVEKVLVANR…DTHFIERYQN (448 aa)). ATP is bound by residues lysine 153, 185-246 (ANKI…PRHI), glutamate 237, and histidine 272. The region spanning 157-355 (KRIMGAAGVP…LVEWQIRIAN (199 aa)) is the ATP-grasp domain. Residues glutamate 312, glutamate 326, and asparagine 328 each contribute to the Mn(2+) site. Arginine 330 is a catalytic residue. A disordered region spans residues 636–665 (YRQTLRAEQSPDDSSQPSASSEARSHPKGS). Residues 647–657 (DDSSQPSASSE) are compositionally biased toward low complexity. The 77-residue stretch at 656 to 732 (SEARSHPKGS…FDSSVLFTVK (77 aa)) folds into the Biotinyl-binding domain. Lysine 698 is modified (N6-biotinyllysine).

Probably a heterodimer composed of biotin-containing alpha subunits and beta subunits. Biotin is required as a cofactor. Mn(2+) serves as cofactor.

The protein localises to the mitochondrion matrix. It catalyses the reaction 3-methylbut-2-enoyl-CoA + hydrogencarbonate + ATP = 3-methyl-(2E)-glutaconyl-CoA + ADP + phosphate + H(+). It participates in amino-acid degradation; L-leucine degradation; (S)-3-hydroxy-3-methylglutaryl-CoA from 3-isovaleryl-CoA: step 2/3. Biotin-attachment subunit of the 3-methylcrotonyl-CoA carboxylase, an enzyme that catalyzes the conversion of 3-methylcrotonyl-CoA to 3-methylglutaconyl-CoA, a critical step for leucine and isovaleric acid catabolism. The chain is Methylcrotonoyl-CoA carboxylase subunit alpha, mitochondrial (MCCA) from Oryza sativa subsp. japonica (Rice).